The primary structure comprises 387 residues: Beta-carotene 4-ketolase (387 aa).

The interval 1-78 (MPHSIDMEDS…GNPTVDDASQ (78 aa)) is disordered. Polar residues-rich tracts occupy residues 43–53 (NWQTQYHSSEG) and 65–78 (DATT…DASQ).

It catalyses the reaction echinenone + 2 AH2 + 2 O2 = canthaxanthin + 2 A + 3 H2O. The catalysed reaction is all-trans-beta-carotene + 2 AH2 + 2 O2 = echinenone + 2 A + 3 H2O. It functions in the pathway carotenoid biosynthesis. In terms of biological role, involved in the biosynthesis of ketocarotenoids which are powerful anti-oxidative molecules. Catalyzes the conversion of beta-carotene to canthaxanthin via echinenone. The protein is Beta-carotene 4-ketolase of Protosiphon botryoides (Green alga).